Reading from the N-terminus, the 286-residue chain is Pantothenate synthetase (286 aa).

30 to 37 contributes to the ATP binding site; that stretch reads MGNLHAGH. His37 (proton donor) is an active-site residue. (R)-pantoate is bound at residue Gln61. Gln61 is a beta-alanine binding site. Position 149-152 (149-152) interacts with ATP; it reads GEKD. Position 155 (Gln155) interacts with (R)-pantoate. Residues Val178 and 186-189 contribute to the ATP site; that span reads MSSR.

The protein belongs to the pantothenate synthetase family. In terms of assembly, homodimer.

It is found in the cytoplasm. The enzyme catalyses (R)-pantoate + beta-alanine + ATP = (R)-pantothenate + AMP + diphosphate + H(+). The protein operates within cofactor biosynthesis; (R)-pantothenate biosynthesis; (R)-pantothenate from (R)-pantoate and beta-alanine: step 1/1. Its function is as follows. Catalyzes the condensation of pantoate with beta-alanine in an ATP-dependent reaction via a pantoyl-adenylate intermediate. In Thioalkalivibrio sulfidiphilus (strain HL-EbGR7), this protein is Pantothenate synthetase.